The sequence spans 372 residues: Heat-inducible transcription repressor HrcA (372 aa).

The segment at 296–331 (VSSGYGRSGEAGEPAGNDPVGEPETESETESQTNDM) is disordered.

The protein belongs to the HrcA family.

Functionally, negative regulator of class I heat shock genes (grpE-dnaK-dnaJ and groELS operons). Prevents heat-shock induction of these operons. This chain is Heat-inducible transcription repressor HrcA, found in Bifidobacterium longum subsp. infantis (strain ATCC 15697 / DSM 20088 / JCM 1222 / NCTC 11817 / S12).